Consider the following 437-residue polypeptide: ATP-dependent RNA helicase SUB2 (437 aa).

A compositionally biased stretch (acidic residues) spans Met1–Val19. A disordered region spans residues Met1 to Gly45. A Q motif motif is present at residues Thr53 to Gln81. The region spanning Ile84 to Ile259 is the Helicase ATP-binding domain. Position 97–104 (Ala97–Thr104) interacts with ATP. The DECD box motif lies at Asp206–Asp209. The Helicase C-terminal domain occupies Lys287–Ser432.

Belongs to the DEAD box helicase family. DECD subfamily.

The protein resides in the nucleus. It catalyses the reaction ATP + H2O = ADP + phosphate + H(+). Functionally, ATP-binding RNA helicase involved in transcription elongation and required for the export of mRNA out of the nucleus. SUB2 also plays a role in pre-mRNA splicing and spliceosome assembly. May be involved in rDNA and telomeric silencing, and maintenance of genome integrity. This Kluyveromyces lactis (strain ATCC 8585 / CBS 2359 / DSM 70799 / NBRC 1267 / NRRL Y-1140 / WM37) (Yeast) protein is ATP-dependent RNA helicase SUB2 (SUB2).